The sequence spans 80 residues: Large ribosomal subunit protein eL20 (80 aa).

The protein belongs to the eukaryotic ribosomal protein eL20 family. In terms of assembly, part of the 50S ribosomal subunit. Binds 23S rRNA.

This Methanopyrus kandleri (strain AV19 / DSM 6324 / JCM 9639 / NBRC 100938) protein is Large ribosomal subunit protein eL20.